The chain runs to 165 residues: Growth arrest and DNA damage-inducible protein GADD45 alpha (165 aa).

At T2 the chain carries Phosphothreonine.

Belongs to the GADD45 family. In terms of assembly, interacts with MAPK14. Predominantly monomeric but also forms dimers and other oligomers as concentration increases. Interacts with GADD45GIP1. Interacts weakly with PCNA. Interacts with AURKA, likely to compete with dimerization.

The protein localises to the nucleus. Its function is as follows. In T-cells, functions as a regulator of p38 MAPKs by inhibiting p88 phosphorylation and activity. Might affect PCNA interaction with some CDK (cell division protein kinase) complexes; stimulates DNA excision repair in vitro and inhibits entry of cells into S phase. This Homo sapiens (Human) protein is Growth arrest and DNA damage-inducible protein GADD45 alpha (GADD45A).